A 388-amino-acid polypeptide reads, in one-letter code: 2-methylene-furan-3-one reductase (388 aa).

Residues 1-60 (MEALLSSTTLQLKPLHPPSSFSSLHSPFSSISVLRVKGSKKAETFIQRSNFSTVLPLRVS) constitute a chloroplast transit peptide. Residues Lys-125, 240-241 (GV), 263-266 (STGK), Tyr-281, 330-332 (FVV), and 377-378 (RA) contribute to the NADP(+) site. Lys-125 provides a ligand contact to substrate.

Belongs to the zinc-containing alcohol dehydrogenase family. Quinone oxidoreductase subfamily. Monomer.

It localises to the plastid. Its subcellular location is the chloroplast. The enzyme catalyses 4-hydroxy-2,5-dimethyl-furan-3(2H)-one + NADP(+) = 4-hydroxy-5-methyl-2-methylenefuran-3(2H)-one + NADPH + H(+). In terms of biological role, enone oxidoreductase involved in the biosynthesis of 4-hydroxy-2,5-dimethyl-3(2H)-furanone (HDMF or furaneol). Can use both NADH and NADPH as the electron donor. In Solanum lycopersicum (Tomato), this protein is 2-methylene-furan-3-one reductase (EO).